The following is a 128-amino-acid chain: Large ribosomal subunit protein bL12 (128 aa).

It belongs to the bacterial ribosomal protein bL12 family. Homodimer. Part of the ribosomal stalk of the 50S ribosomal subunit. Forms a multimeric L10(L12)X complex, where L10 forms an elongated spine to which 2 to 4 L12 dimers bind in a sequential fashion. Binds GTP-bound translation factors.

Forms part of the ribosomal stalk which helps the ribosome interact with GTP-bound translation factors. Is thus essential for accurate translation. In Synechocystis sp. (strain ATCC 27184 / PCC 6803 / Kazusa), this protein is Large ribosomal subunit protein bL12.